A 257-amino-acid chain; its full sequence is Pyridoxal phosphate homeostasis protein (257 aa).

N6-(pyridoxal phosphate)lysine is present on Lys47.

The protein belongs to the pyridoxal phosphate-binding protein YggS/PROSC family.

Its function is as follows. Pyridoxal 5'-phosphate (PLP)-binding protein, which is involved in PLP homeostasis. This is Pyridoxal phosphate homeostasis protein from Mycobacterium leprae (strain TN).